Consider the following 603-residue polypeptide: DNA-directed RNA polymerase subunit beta' N-terminal section (603 aa).

Residues Cys-283, Cys-285, Cys-329, and Cys-332 each contribute to the Zn(2+) site.

It belongs to the RNA polymerase beta' chain family. RpoC1 subfamily. In terms of assembly, in plastids the minimal PEP RNA polymerase catalytic core is composed of four subunits: alpha, beta, beta', and beta''. When a (nuclear-encoded) sigma factor is associated with the core the holoenzyme is formed, which can initiate transcription. Zn(2+) is required as a cofactor.

Its subcellular location is the plastid. The protein localises to the chloroplast. The catalysed reaction is RNA(n) + a ribonucleoside 5'-triphosphate = RNA(n+1) + diphosphate. In terms of biological role, DNA-dependent RNA polymerase catalyzes the transcription of DNA into RNA using the four ribonucleoside triphosphates as substrates. In Chlamydomonas reinhardtii (Chlamydomonas smithii), this protein is DNA-directed RNA polymerase subunit beta' N-terminal section (rpoC1A).